The chain runs to 277 residues: uncharacterized protein (277 aa).

An N-terminal signal peptide occupies residues 1–25 (MNKKSIWSKTAFGSLFLLLGTAFTA). Cys-26 carries the N-palmitoyl cysteine lipid modification. A lipid anchor (S-diacylglycerol cysteine) is attached at Cys-26.

It belongs to the MG439/MG440 family.

The protein resides in the cell membrane. This is an uncharacterized protein from Mycoplasma pneumoniae (strain ATCC 29342 / M129 / Subtype 1) (Mycoplasmoides pneumoniae).